A 61-amino-acid polypeptide reads, in one-letter code: Cytotoxin 3 (61 aa).

4 cysteine pairs are disulfide-bonded: Cys-3-Cys-22, Cys-15-Cys-39, Cys-43-Cys-54, and Cys-55-Cys-60.

The protein belongs to the three-finger toxin family. Short-chain subfamily. Type IB cytotoxin sub-subfamily. In terms of tissue distribution, expressed by the venom gland.

The protein resides in the secreted. Functionally, this protein lyses red blood cells and has cardiotoxic and hypotensive activities. The polypeptide is Cytotoxin 3 (Hemachatus haemachatus (Rinkhals)).